Reading from the N-terminus, the 314-residue chain is Torsin-2A (314 aa).

The first 19 residues, 1–19, serve as a signal peptide directing secretion; it reads MAVRWWIIPMLLLVPGSSG. ATP is bound at residue 86–93; sequence GWSGTGKT. N-linked (GlcNAc...) asparagine glycans are attached at residues asparagine 142 and asparagine 283.

This sequence belongs to the ClpA/ClpB family. Torsin subfamily. As to quaternary structure, homohexamer.

The protein resides in the endoplasmic reticulum lumen. This Xenopus laevis (African clawed frog) protein is Torsin-2A (tor2a).